Here is a 653-residue protein sequence, read N- to C-terminus: Macrolide export ATP-binding/permease protein MacB (653 aa).

The 239-residue stretch at 6 to 244 folds into the ABC transporter domain; that stretch reads IELQGVSRSY…PPLLPCSAHP (239 aa). 42–49 contacts ATP; sequence GSSGSGKS. A run of 4 helical transmembrane segments spans residues 275 to 295, 525 to 545, 576 to 596, and 616 to 636; these read LLTM…VGLG, FSVL…LGVM, FLIE…LLAL, and WPAV…FGYW.

The protein belongs to the ABC transporter superfamily. Macrolide exporter (TC 3.A.1.122) family. As to quaternary structure, homodimer. Part of the tripartite efflux system MacAB-TolC, which is composed of an inner membrane transporter, MacB, a periplasmic membrane fusion protein, MacA, and an outer membrane component, TolC. The complex forms a large protein conduit and can translocate molecules across both the inner and outer membranes. Interacts with MacA.

Its subcellular location is the cell inner membrane. Part of the tripartite efflux system MacAB-TolC. MacB is a non-canonical ABC transporter that contains transmembrane domains (TMD), which form a pore in the inner membrane, and an ATP-binding domain (NBD), which is responsible for energy generation. Confers resistance against macrolides. This is Macrolide export ATP-binding/permease protein MacB from Sodalis glossinidius (strain morsitans).